The chain runs to 470 residues: PTS system trehalose-specific EIIBC component (470 aa).

A PTS EIIB type-1 domain is found at 1–88 (MGELNKSARQ…VKETGIGEST (88 aa)). Cysteine 27 acts as the Phosphocysteine intermediate; for EIIB activity in catalysis. At cysteine 27 the chain carries Phosphocysteine; by EIIA. Residues 108–470 (KTLADIFIPI…TYAYARFKHK (363 aa)) enclose the PTS EIIC type-1 domain. The next 10 membrane-spanning stretches (helical) occupy residues 110–130 (LADI…LMGI), 160–180 (INLI…WSAV), 183–203 (FGGN…PDLL), 234–254 (GQVL…VFLT), 263–283 (LLVV…IIIG), 301–321 (FGSF…ALVI), 326–346 (HTFL…TFLW), 347–367 (PMLA…MFIV), 403–423 (FIIA…QGVL), and 443–463 (WGAF…GTYA).

The protein localises to the cell membrane. It catalyses the reaction alpha,alpha-trehalose(out) + N(pros)-phospho-L-histidyl-[protein] = alpha,alpha-trehalose 6-phosphate(in) + L-histidyl-[protein]. In terms of biological role, the phosphoenolpyruvate-dependent sugar phosphotransferase system (sugar PTS), a major carbohydrate active transport system, catalyzes the phosphorylation of incoming sugar substrates concomitantly with their translocation across the cell membrane. This system is involved in trehalose transport. This chain is PTS system trehalose-specific EIIBC component (treP), found in Bacillus subtilis (strain 168).